Consider the following 295-residue polypeptide: Trimeric intracellular cation channel type A (295 aa).

At 1-18 the chain is on the lumenal side; that stretch reads MELLSALSLGELALSFSR. A helical membrane pass occupies residues 19–39; it reads VPLFPVFDLSYFIVSILYLKY. At 40–51 the chain is on the cytoplasmic side; sequence EPGAVELSRRHP. Residues 52 to 72 form a helical membrane-spanning segment; sequence VASWLCAMLHCFGSYILADLL. Residues 73–85 lie on the Lumenal side of the membrane; that stretch reads LGEPLIDYFSNNS. A Ca(2+)-binding site is contributed by glycine 74. The helical transmembrane segment at 86-106 threads the bilayer; it reads SILLASAVWYLIFFCPLDLFY. The Cytoplasmic portion of the chain corresponds to 107–144; the sequence is KCVCFLPVKLIFVAMKEVVRVRKIAVGIHHAHHHYHHG. 2 residues coordinate a 1,2-diacyl-sn-glycero-3-phospho-(1D-myo-inositol-4,5-bisphosphate): lysine 122 and arginine 126. A helical transmembrane segment spans residues 145–165; sequence WFIMIATGWVKGSGVALLSNV. The Lumenal segment spans residues 166-178; sequence EQLLRGVWKPETN. The chain crosses the membrane as a helical span at residues 179–199; the sequence is EILHMSFPTKASLYGAILFTL. At 200-209 the chain is on the cytoplasmic side; it reads QQTRWLPVSK. Residues 210-230 traverse the membrane as a helical segment; sequence ASLIFIFTMFMVSCKVFLTAT. At 231-234 the chain is on the lumenal side; sequence HSHS. The chain crosses the membrane as a helical span at residues 235 to 255; that stretch reads SPFDVLEAYVCPVLFGTGSGG. At 256–295 the chain is on the cytoplasmic side; that stretch reads DHPQDNHGAWPGGPPSGALATKSKEELSEGSRKKKTKKAD. Residues 256–295 are disordered; it reads DHPQDNHGAWPGGPPSGALATKSKEELSEGSRKKKTKKAD. Basic and acidic residues predominate over residues 277-286; the sequence is KSKEELSEGS.

This sequence belongs to the TMEM38 family. In terms of assembly, homotrimer; conformation seems to be controled by binding to diacylglycerol (DAG).

Its subcellular location is the sarcoplasmic reticulum membrane. The protein resides in the nucleus membrane. It carries out the reaction K(+)(in) = K(+)(out). Channel activity is activated by a change of voltage within the sarcoplasmic reticulum lumen and blocked by luminal high Ca(2+) levels. Functionally, intracellular monovalent cation channel required for maintenance of rapid intracellular calcium release. Acts as a potassium counter-ion channel that functions in synchronization with calcium release from intracellular stores. Opened by a change of voltage within the sarcoplasmic reticulum lumen. The protein is Trimeric intracellular cation channel type A of Oryctolagus cuniculus (Rabbit).